Here is a 280-residue protein sequence, read N- to C-terminus: 4-diphosphocytidyl-2-C-methyl-D-erythritol kinase (280 aa).

Lysine 8 is a catalytic residue. 91 to 101 (PVAAGLAGGST) provides a ligand contact to ATP. Aspartate 133 is an active-site residue.

It belongs to the GHMP kinase family. IspE subfamily.

The enzyme catalyses 4-CDP-2-C-methyl-D-erythritol + ATP = 4-CDP-2-C-methyl-D-erythritol 2-phosphate + ADP + H(+). It participates in isoprenoid biosynthesis; isopentenyl diphosphate biosynthesis via DXP pathway; isopentenyl diphosphate from 1-deoxy-D-xylulose 5-phosphate: step 3/6. Its function is as follows. Catalyzes the phosphorylation of the position 2 hydroxy group of 4-diphosphocytidyl-2C-methyl-D-erythritol. The protein is 4-diphosphocytidyl-2-C-methyl-D-erythritol kinase of Clostridium botulinum (strain 657 / Type Ba4).